We begin with the raw amino-acid sequence, 227 residues long: Cytochrome c oxidase subunit 2 (227 aa).

At 1–14 (MAYPMQLGFQDATS) the chain is on the mitochondrial intermembrane side. A helical transmembrane segment spans residues 15-45 (PIMEELLHFHDHTLMIVFLISSLVLYIISLM). At 46 to 59 (LTTKLTHTSTMDAQ) the chain is on the mitochondrial matrix side. The helical transmembrane segment at 60-87 (EVETVWTILPAVILIMIALPSLRILYMM) threads the bilayer. At 88 to 227 (DEINNPSLTV…HFEKWSASML (140 aa)) the chain is on the mitochondrial intermembrane side. Residues His161, Cys196, Glu198, Cys200, His204, and Met207 each coordinate Cu cation. Glu198 provides a ligand contact to Mg(2+).

Belongs to the cytochrome c oxidase subunit 2 family. As to quaternary structure, component of the cytochrome c oxidase (complex IV, CIV), a multisubunit enzyme composed of 14 subunits. The complex is composed of a catalytic core of 3 subunits MT-CO1, MT-CO2 and MT-CO3, encoded in the mitochondrial DNA, and 11 supernumerary subunits COX4I, COX5A, COX5B, COX6A, COX6B, COX6C, COX7A, COX7B, COX7C, COX8 and NDUFA4, which are encoded in the nuclear genome. The complex exists as a monomer or a dimer and forms supercomplexes (SCs) in the inner mitochondrial membrane with NADH-ubiquinone oxidoreductase (complex I, CI) and ubiquinol-cytochrome c oxidoreductase (cytochrome b-c1 complex, complex III, CIII), resulting in different assemblies (supercomplex SCI(1)III(2)IV(1) and megacomplex MCI(2)III(2)IV(2)). Found in a complex with TMEM177, COA6, COX18, COX20, SCO1 and SCO2. Interacts with TMEM177 in a COX20-dependent manner. Interacts with COX20. Interacts with COX16. Cu cation serves as cofactor.

It is found in the mitochondrion inner membrane. The enzyme catalyses 4 Fe(II)-[cytochrome c] + O2 + 8 H(+)(in) = 4 Fe(III)-[cytochrome c] + 2 H2O + 4 H(+)(out). Its function is as follows. Component of the cytochrome c oxidase, the last enzyme in the mitochondrial electron transport chain which drives oxidative phosphorylation. The respiratory chain contains 3 multisubunit complexes succinate dehydrogenase (complex II, CII), ubiquinol-cytochrome c oxidoreductase (cytochrome b-c1 complex, complex III, CIII) and cytochrome c oxidase (complex IV, CIV), that cooperate to transfer electrons derived from NADH and succinate to molecular oxygen, creating an electrochemical gradient over the inner membrane that drives transmembrane transport and the ATP synthase. Cytochrome c oxidase is the component of the respiratory chain that catalyzes the reduction of oxygen to water. Electrons originating from reduced cytochrome c in the intermembrane space (IMS) are transferred via the dinuclear copper A center (CU(A)) of subunit 2 and heme A of subunit 1 to the active site in subunit 1, a binuclear center (BNC) formed by heme A3 and copper B (CU(B)). The BNC reduces molecular oxygen to 2 water molecules using 4 electrons from cytochrome c in the IMS and 4 protons from the mitochondrial matrix. The sequence is that of Cytochrome c oxidase subunit 2 (MT-CO2) from Tragelaphus imberbis (Lesser kudu).